We begin with the raw amino-acid sequence, 317 residues long: ADP-L-glycero-D-manno-heptose-6-epimerase (317 aa).

NADP(+) is bound by residues F10–I11, D31–D32, K38, K53, Q75–S79, and N92. The active-site Proton acceptor is the Y139. NADP(+) is bound at residue K143. N166 contacts substrate. Residues V167 and K175 each coordinate NADP(+). K175 serves as the catalytic Proton acceptor. Substrate contacts are provided by residues G177, H184, F198–H201, R211, and Y275.

It belongs to the NAD(P)-dependent epimerase/dehydratase family. HldD subfamily. In terms of assembly, homopentamer. Requires NADP(+) as cofactor.

It carries out the reaction ADP-D-glycero-beta-D-manno-heptose = ADP-L-glycero-beta-D-manno-heptose. Its pathway is nucleotide-sugar biosynthesis; ADP-L-glycero-beta-D-manno-heptose biosynthesis; ADP-L-glycero-beta-D-manno-heptose from D-glycero-beta-D-manno-heptose 7-phosphate: step 4/4. Its function is as follows. Catalyzes the interconversion between ADP-D-glycero-beta-D-manno-heptose and ADP-L-glycero-beta-D-manno-heptose via an epimerization at carbon 6 of the heptose. This is ADP-L-glycero-D-manno-heptose-6-epimerase from Shewanella loihica (strain ATCC BAA-1088 / PV-4).